The sequence spans 396 residues: Elongation factor Tu (396 aa).

Residues 10–205 (KPHVNIGTIG…ACDDNIPDPV (196 aa)) enclose the tr-type G domain. The tract at residues 19–26 (GHVDHGKT) is G1. A GTP-binding site is contributed by 19–26 (GHVDHGKT). Thr-26 contacts Mg(2+). The tract at residues 62–66 (GITIN) is G2. A G3 region spans residues 83-86 (DAPG). GTP contacts are provided by residues 83–87 (DAPGH) and 138–141 (NKCD). Residues 138-141 (NKCD) form a G4 region. A G5 region spans residues 175–177 (SAL).

The protein belongs to the TRAFAC class translation factor GTPase superfamily. Classic translation factor GTPase family. EF-Tu/EF-1A subfamily. As to quaternary structure, monomer.

Its subcellular location is the cytoplasm. It carries out the reaction GTP + H2O = GDP + phosphate + H(+). Functionally, GTP hydrolase that promotes the GTP-dependent binding of aminoacyl-tRNA to the A-site of ribosomes during protein biosynthesis. The chain is Elongation factor Tu from Corynebacterium glutamicum (strain R).